The primary structure comprises 345 residues: Protein-arginine kinase (345 aa).

The 231-residue stretch at 15–245 (LVISSRIRLA…LQIINQEIIS (231 aa)) folds into the Phosphagen kinase C-terminal domain. ATP is bound by residues 18–22 (SSRIR), His-82, Arg-116, 167–171 (RASVM), and 198–203 (RGLYGE). Residues 328-333 (RDFNRA) carry the RDXXRA motif of the pArg binding pocket involved in allosteric regulation motif.

The protein belongs to the ATP:guanido phosphotransferase family.

It catalyses the reaction L-arginyl-[protein] + ATP = N(omega)-phospho-L-arginyl-[protein] + ADP + H(+). Its activity is regulated as follows. Appears to be allosterically activated by the binding of pArg-containing polypeptides to the pArg-binding pocket localized in the C-terminal domain of McsB. Catalyzes the specific phosphorylation of arginine residues in proteins. The chain is Protein-arginine kinase from Clostridium kluyveri (strain NBRC 12016).